A 251-amino-acid chain; its full sequence is Derlin-1 (251 aa).

Residue Ser-2 is modified to N-acetylserine. Residues 2-15 are Cytoplasmic-facing; sequence SDIGDWFRSIPTIT. A helical transmembrane segment spans residues 16-31; that stretch reads RYWFAATVAVPLVGKL. Over 32 to 69 the chain is Lumenal; that stretch reads GLISPAYFFLWPEAFLYRFQIWRPITATFYFPVGPGTG. The chain crosses the membrane as a helical span at residues 70 to 89; that stretch reads FLYLVNLYFLYQYSTRLETG. The Cytoplasmic portion of the chain corresponds to 90–94; that stretch reads AFDGR. A helical transmembrane segment spans residues 95 to 115; it reads PADYLFMLLFNWICIVITGLA. Topologically, residues 116–122 are lumenal; the sequence is MDMQLLM. Residues 123–137 form a helical membrane-spanning segment; sequence IPLIMSVLYVWAQLN. The Cytoplasmic segment spans residues 138–154; it reads RDMIVSFWFGTRFKACY. Residues 155-166 traverse the membrane as a helical segment; that stretch reads LPWVILGFNYII. Topologically, residues 167-170 are lumenal; it reads GGSV. The chain crosses the membrane as a helical span at residues 171–189; that stretch reads INELIGNLVGHLYFFLMFR. Residues 190 to 251 are Cytoplasmic-facing; the sequence is YPMDLGGRNF…WGQGFRLGDQ (62 aa). Ser-201 is modified (phosphoserine). Thr-202 is subject to Phosphothreonine. At Ser-226 the chain carries Phosphoserine. The disordered stretch occupies residues 229–251; it reads RAADQNGGGGRHNWGQGFRLGDQ. Positions 241 to 248 match the SHP-box motif; it reads NWGQGFRL.

The protein belongs to the derlin family. Homotetramer. The four subunits of the tetramer are arranged in a twofold symmetry. Forms homo- and heterooligomers with DERL2 and DERL3; binding to DERL3 is poorer than that between DERL2 and DERL3. Interacts (via SHP-box motif) with VCP. Interacts with AMFR, SELENOS, SEL1L, SELENOK and SYVN1, as well as with SEL1L-SYVN1 and VCP-SELENOS protein complexes; this interaction is weaker than that observed between DERL2 and these complexes. Interacts with NGLY1 and YOD1. Does not bind to EDEM1. Interacts with DNAJB9. Interacts with RNF103. Interacts with HM13. Interacts with XBP1 isoform 1 (via luminal/ectodomain domain); the interaction obviates the need for ectodomain shedding prior HM13/SPP-mediated XBP1 isoform 1 cleavage. Interacts with the signal recognition particle/SRP and the SRP receptor; in the process of endoplasmic reticulum stress-induced pre-emptive quality control. May interact with UBXN6. Interacts with ZFAND2B; probably through VCP. Interacts with CCDC47. Interacts with C18orf32. May interact with TRAM1. Forms a complex with SVIP and VCP/p97.

The protein localises to the endoplasmic reticulum membrane. In terms of biological role, functional component of endoplasmic reticulum-associated degradation (ERAD) for misfolded lumenal proteins. Forms homotetramers which encircle a large channel traversing the endoplasmic reticulum (ER) membrane. This allows the retrotranslocation of misfolded proteins from the ER into the cytosol where they are ubiquitinated and degraded by the proteasome. The channel has a lateral gate within the membrane which provides direct access to membrane proteins with no need to reenter the ER lumen first. May mediate the interaction between VCP and the misfolded protein. Also involved in endoplasmic reticulum stress-induced pre-emptive quality control, a mechanism that selectively attenuates the translocation of newly synthesized proteins into the endoplasmic reticulum and reroutes them to the cytosol for proteasomal degradation. By controlling the steady-state expression of the IGF1R receptor, indirectly regulates the insulin-like growth factor receptor signaling pathway. This Bos taurus (Bovine) protein is Derlin-1.